We begin with the raw amino-acid sequence, 307 residues long: N-acetylglucosaminyl-diphospho-decaprenol L-rhamnosyltransferase (307 aa).

The protein belongs to the glycosyltransferase 2 family. The cofactor is Mn(2+). Mg(2+) is required as a cofactor.

The catalysed reaction is N-acetyl-alpha-D-glucosaminyl-1-diphospho-trans,octa-cis-decaprenol + dTDP-beta-L-rhamnose = alpha-L-rhamnosyl-(1-&gt;3)-N-acetyl-alpha-D-glucosaminyl-diphospho-trans,octa-cis-decaprenol + dTDP + H(+). Its function is as follows. Involved in the biosynthesis of the mycolylarabinogalactan-peptidoglycan (mAGP) complex, an essential component of the mycobacterial cell wall. Catalyzes the transfer of the rhamnosyl moiety from dTDP-rhamnosyl (dTDP-Rha) onto the decaprenyl-pyrophosphoryl-GlcNAc (C50-PP-GlcNAc), yielding rhamnosyl-decaprenyl-pyrophosphoryl-GlcNAc (Rha-C50-PP-GlcNAc). In Mycobacterium tuberculosis (strain CDC 1551 / Oshkosh), this protein is N-acetylglucosaminyl-diphospho-decaprenol L-rhamnosyltransferase (wbbL).